The primary structure comprises 1072 residues: Carbamoyl phosphate synthase large chain (1072 aa).

The interval M1–E401 is carboxyphosphate synthetic domain. 12 residues coordinate ATP: R129, R169, G175, G176, K208, I210, E215, G241, V242, H243, Q284, and E298. Residues R133–V327 form the ATP-grasp 1 domain. Mg(2+) is bound by residues Q284, E298, and N300. Residues Q284, E298, and N300 each contribute to the Mn(2+) site. Residues L402–S546 are oligomerization domain. The interval I547–G929 is carbamoyl phosphate synthetic domain. One can recognise an ATP-grasp 2 domain in the interval E671 to L861. ATP-binding residues include R707, R746, E752, G777, V778, H779, S780, Q820, and E832. Positions 820, 832, and 834 each coordinate Mg(2+). Q820, E832, and N834 together coordinate Mn(2+). In terms of domain architecture, MGS-like spans I930 to A1072. The allosteric domain stretch occupies residues I930–A1072.

The protein belongs to the CarB family. Composed of two chains; the small (or glutamine) chain promotes the hydrolysis of glutamine to ammonia, which is used by the large (or ammonia) chain to synthesize carbamoyl phosphate. Tetramer of heterodimers (alpha,beta)4. Requires Mg(2+) as cofactor. It depends on Mn(2+) as a cofactor.

The enzyme catalyses hydrogencarbonate + L-glutamine + 2 ATP + H2O = carbamoyl phosphate + L-glutamate + 2 ADP + phosphate + 2 H(+). It catalyses the reaction hydrogencarbonate + NH4(+) + 2 ATP = carbamoyl phosphate + 2 ADP + phosphate + 2 H(+). It functions in the pathway amino-acid biosynthesis; L-arginine biosynthesis; carbamoyl phosphate from bicarbonate: step 1/1. It participates in pyrimidine metabolism; UMP biosynthesis via de novo pathway; (S)-dihydroorotate from bicarbonate: step 1/3. Large subunit of the glutamine-dependent carbamoyl phosphate synthetase (CPSase). CPSase catalyzes the formation of carbamoyl phosphate from the ammonia moiety of glutamine, carbonate, and phosphate donated by ATP, constituting the first step of 2 biosynthetic pathways, one leading to arginine and/or urea and the other to pyrimidine nucleotides. The large subunit (synthetase) binds the substrates ammonia (free or transferred from glutamine from the small subunit), hydrogencarbonate and ATP and carries out an ATP-coupled ligase reaction, activating hydrogencarbonate by forming carboxy phosphate which reacts with ammonia to form carbamoyl phosphate. In Bacillus cereus (strain B4264), this protein is Carbamoyl phosphate synthase large chain.